The sequence spans 398 residues: Chorismate synthase (398 aa).

Positions 44 and 50 each coordinate NADP(+). Residues 133-135, 261-262, Gly-306, 321-325, and Arg-347 each bind FMN; these read RAS, QA, and KPIPT.

The protein belongs to the chorismate synthase family. Homotetramer. It depends on FMNH2 as a cofactor.

It carries out the reaction 5-O-(1-carboxyvinyl)-3-phosphoshikimate = chorismate + phosphate. The protein operates within metabolic intermediate biosynthesis; chorismate biosynthesis; chorismate from D-erythrose 4-phosphate and phosphoenolpyruvate: step 7/7. Catalyzes the anti-1,4-elimination of the C-3 phosphate and the C-6 proR hydrogen from 5-enolpyruvylshikimate-3-phosphate (EPSP) to yield chorismate, which is the branch point compound that serves as the starting substrate for the three terminal pathways of aromatic amino acid biosynthesis. This reaction introduces a second double bond into the aromatic ring system. The chain is Chorismate synthase from Aquifex aeolicus (strain VF5).